Here is a 559-residue protein sequence, read N- to C-terminus: Alpha-(1,6)-fucosyltransferase (559 aa).

The Cytoplasmic segment spans residues 1 to 4 (MLKC). A helical; Signal-anchor for type II membrane protein membrane pass occupies residues 5–24 (IAAVGTVVWMTMFLFLYSQL). Topologically, residues 25–559 (SNNQSGGDSI…RKFKFEALLD (535 aa)) are lumenal. Asn-27 is a glycosylation site (N-linked (GlcNAc...) asparagine). A compositionally biased stretch (basic and acidic residues) spans 63–74 (QERNDQHKKIME). Residues 63–90 (QERNDQHKKIMEQSHQLPPNPENPSLPK) are disordered. The span at 80–90 (PPNPENPSLPK) shows a compositional bias: pro residues. Residue Asn-134 is glycosylated (N-linked (GlcNAc...) asparagine). 3 cysteine pairs are disulfide-bonded: Cys-188–Cys-251, Cys-196–Cys-214, and Cys-202–Cys-206. The GT23 domain occupies 190-480 (EAKTLVCNLD…ADDGSKFHSL (291 aa)). Residues 351–352 (RR) form an important for donor substrate binding region. Residues Cys-452 and Cys-459 are joined by a disulfide bond. The SH3 domain occupies 489 to 550 (QQAHEVIVIE…PSYKVVNDWR (62 aa)).

It belongs to the glycosyltransferase 23 family. Mn(2+) is required as a cofactor. Requires Mg(2+) as cofactor.

The protein resides in the golgi apparatus. It is found in the golgi stack membrane. It catalyses the reaction N(4)-{beta-D-GlcNAc-(1-&gt;2)-alpha-D-Man-(1-&gt;3)-[beta-D-GlcNAc-(1-&gt;2)-alpha-D-Man-(1-&gt;6)]-beta-D-Man-(1-&gt;4)-beta-D-GlcNAc-(1-&gt;4)-beta-D-GlcNAc}-L-asparaginyl-[protein] + GDP-beta-L-fucose = an N(4)-{beta-D-GlcNAc-(1-&gt;2)-alpha-D-Man-(1-&gt;3)-[beta-D-GlcNAc-(1-&gt;2)-alpha-D-Man-(1-&gt;6)]-beta-D-Man-(1-&gt;4)-beta-D-GlcNAc-(1-&gt;4)-[alpha-L-Fuc-(1-&gt;6)]-beta-D-GlcNAc}-L-asparaginyl-[protein] + GDP + H(+). Its pathway is protein modification; protein glycosylation. With respect to regulation, inhibited by Fe(3+), Ni(2+) and Cu(2+). Its function is as follows. Catalyzes the addition of fucose in alpha 1-6 linkage to the first GlcNAc residue, next to the peptide chains in N-glycans. The addition is prevented if the GlcNAc residue is already fucosylated. Involved in susceptibility to the nematotoxic C.cinerea galectin Cgl2, likely by contributing to the synthesis of core alpha-1,6-fucosylated N-glycans to which Cgl2 binds. This chain is Alpha-(1,6)-fucosyltransferase, found in Caenorhabditis elegans.